The primary structure comprises 502 residues: Smr domain-containing protein C1235.03 (502 aa).

The tract at residues 150-184 is disordered; that stretch reads LITSNIGHRSRQRKKKTKKATNSRKPLSKFQSNTE. Over residues 157 to 171 the composition is skewed to basic residues; the sequence is HRSRQRKKKTKKATN. Residues 411 to 459 enclose the Smr domain; sequence SLDLHGATVREAKTIVRERVAAWWAKEADTSPNSIRPFVIVTGRGNHSI.

Its subcellular location is the nucleus. The protein localises to the nucleolus. In Schizosaccharomyces pombe (strain 972 / ATCC 24843) (Fission yeast), this protein is Smr domain-containing protein C1235.03.